The primary structure comprises 303 residues: Protoheme IX farnesyltransferase 1 (303 aa).

9 consecutive transmembrane segments (helical) span residues 18–38 (PGIIMGNLISVAGGFLLAAQG), 42–62 (LTLMFATMIGLSLVVASGCAV), 91–111 (AVLSFGIGLGIIGFAMLAIFT), 114–134 (LAVLFAAIGYVVYVGVYSLYM), 139–159 (VYGTLVGSFSGAVPPVVGYCA), 169–189 (VILLLMFSLWQMPHSYAIAIF), 213–233 (LHIVLYIAVFAVVSALLPLAG), 235–255 (TGIAFMAVTFATSLWWLAMAL), and 274–294 (FSIITITALSVTMALDFQVVA).

It belongs to the UbiA prenyltransferase family. Protoheme IX farnesyltransferase subfamily.

The protein resides in the cell inner membrane. It carries out the reaction heme b + (2E,6E)-farnesyl diphosphate + H2O = Fe(II)-heme o + diphosphate. The protein operates within porphyrin-containing compound metabolism; heme O biosynthesis; heme O from protoheme: step 1/1. Converts heme B (protoheme IX) to heme O by substitution of the vinyl group on carbon 2 of heme B porphyrin ring with a hydroxyethyl farnesyl side group. The protein is Protoheme IX farnesyltransferase 1 of Shewanella frigidimarina (strain NCIMB 400).